A 425-amino-acid chain; its full sequence is DNA replication and repair protein RecF (425 aa).

ATP is bound at residue Gly30–Thr37.

Belongs to the RecF family.

It localises to the cytoplasm. Functionally, the RecF protein is involved in DNA metabolism; it is required for DNA replication and normal SOS inducibility. RecF binds preferentially to single-stranded, linear DNA. It also seems to bind ATP. In Corynebacterium jeikeium (strain K411), this protein is DNA replication and repair protein RecF.